The chain runs to 70 residues: Cold shock-like protein CspF (70 aa).

The region spanning 7-67 (GIVKTFDGKS…GLRGPSAANV (61 aa)) is the CSD domain.

It is found in the cytoplasm. The protein is Cold shock-like protein CspF (cspF) of Escherichia coli (strain K12).